A 134-amino-acid polypeptide reads, in one-letter code: Interleukin-5 (134 aa).

The first 19 residues, 1-19, serve as a signal peptide directing secretion; the sequence is MRMLLHLSLLALGASYMYA. The O-linked (GalNAc...) threonine glycan is linked to T22. Residues N47 and N90 are each glycosylated (N-linked (GlcNAc...) asparagine).

This sequence belongs to the IL-5 family. As to quaternary structure, homodimer; disulfide-linked. Interacts with IL5RA. Interacts with CSF2RB.

The protein localises to the secreted. Its function is as follows. Homodimeric cytokine expressed predominantly by T-lymphocytes and NK cells that plays an important role in the survival, differentiation, and chemotaxis of eosinophils. Also acts on activated and resting B-cells to induce immunoglobulin production, growth, and differentiation. Mechanistically, exerts its biological effects through a receptor composed of IL5RA subunit and the cytokine receptor common subunit beta/CSF2RB. Binding to the receptor leads to activation of various kinases including LYN, SYK and JAK2 and thereby propagates signals through the RAS-MAPK and JAK-STAT5 pathways respectively. The protein is Interleukin-5 (IL5) of Cercocebus atys (Sooty mangabey).